The primary structure comprises 217 residues: 3,4-dihydroxy-2-butanone 4-phosphate synthase (217 aa).

D-ribulose 5-phosphate-binding positions include R37 to E38, D42, R150 to T154, and E174. Position 38 (E38) interacts with Mg(2+). A Mg(2+)-binding site is contributed by H153.

The protein belongs to the DHBP synthase family. In terms of assembly, homodimer. The cofactor is Mg(2+). It depends on Mn(2+) as a cofactor.

The catalysed reaction is D-ribulose 5-phosphate = (2S)-2-hydroxy-3-oxobutyl phosphate + formate + H(+). It functions in the pathway cofactor biosynthesis; riboflavin biosynthesis; 2-hydroxy-3-oxobutyl phosphate from D-ribulose 5-phosphate: step 1/1. Its function is as follows. Catalyzes the conversion of D-ribulose 5-phosphate to formate and 3,4-dihydroxy-2-butanone 4-phosphate. The sequence is that of 3,4-dihydroxy-2-butanone 4-phosphate synthase from Enterobacter sp. (strain 638).